A 242-amino-acid polypeptide reads, in one-letter code: Biosynthetic peptidoglycan transglycosylase (242 aa).

The chain crosses the membrane as a helical span at residues 12–32; it reads LLLWLIALSVLLVLLLRWVPP.

The protein belongs to the glycosyltransferase 51 family.

It localises to the cell inner membrane. It catalyses the reaction [GlcNAc-(1-&gt;4)-Mur2Ac(oyl-L-Ala-gamma-D-Glu-L-Lys-D-Ala-D-Ala)](n)-di-trans,octa-cis-undecaprenyl diphosphate + beta-D-GlcNAc-(1-&gt;4)-Mur2Ac(oyl-L-Ala-gamma-D-Glu-L-Lys-D-Ala-D-Ala)-di-trans,octa-cis-undecaprenyl diphosphate = [GlcNAc-(1-&gt;4)-Mur2Ac(oyl-L-Ala-gamma-D-Glu-L-Lys-D-Ala-D-Ala)](n+1)-di-trans,octa-cis-undecaprenyl diphosphate + di-trans,octa-cis-undecaprenyl diphosphate + H(+). It functions in the pathway cell wall biogenesis; peptidoglycan biosynthesis. In terms of biological role, peptidoglycan polymerase that catalyzes glycan chain elongation from lipid-linked precursors. In Stutzerimonas stutzeri (strain A1501) (Pseudomonas stutzeri), this protein is Biosynthetic peptidoglycan transglycosylase.